Reading from the N-terminus, the 276-residue chain is Hydroxyethylthiazole kinase (276 aa).

Positions 126 and 172 each coordinate ATP. Gly-199 contributes to the substrate binding site.

The protein belongs to the Thz kinase family. Requires Mg(2+) as cofactor.

The enzyme catalyses 5-(2-hydroxyethyl)-4-methylthiazole + ATP = 4-methyl-5-(2-phosphooxyethyl)-thiazole + ADP + H(+). It participates in cofactor biosynthesis; thiamine diphosphate biosynthesis; 4-methyl-5-(2-phosphoethyl)-thiazole from 5-(2-hydroxyethyl)-4-methylthiazole: step 1/1. In terms of biological role, catalyzes the phosphorylation of the hydroxyl group of 4-methyl-5-beta-hydroxyethylthiazole (THZ). This chain is Hydroxyethylthiazole kinase, found in Burkholderia pseudomallei (strain 1710b).